The primary structure comprises 139 residues: Transcription antitermination protein NusB (139 aa).

The protein belongs to the NusB family.

Functionally, involved in transcription antitermination. Required for transcription of ribosomal RNA (rRNA) genes. Binds specifically to the boxA antiterminator sequence of the ribosomal RNA (rrn) operons. The protein is Transcription antitermination protein NusB of Natranaerobius thermophilus (strain ATCC BAA-1301 / DSM 18059 / JW/NM-WN-LF).